We begin with the raw amino-acid sequence, 152 residues long: 6,7-dimethyl-8-ribityllumazine synthase (152 aa).

5-amino-6-(D-ribitylamino)uracil-binding positions include phenylalanine 21, 55 to 57, and 79 to 81; these read AFE and CVI. A (2S)-2-hydroxy-3-oxobutyl phosphate-binding site is contributed by 84–85; that stretch reads AT. Catalysis depends on histidine 87, which acts as the Proton donor. Phenylalanine 112 provides a ligand contact to 5-amino-6-(D-ribitylamino)uracil. Arginine 126 provides a ligand contact to (2S)-2-hydroxy-3-oxobutyl phosphate.

Belongs to the DMRL synthase family. In terms of assembly, forms an icosahedral capsid composed of 60 subunits, arranged as a dodecamer of pentamers.

The catalysed reaction is (2S)-2-hydroxy-3-oxobutyl phosphate + 5-amino-6-(D-ribitylamino)uracil = 6,7-dimethyl-8-(1-D-ribityl)lumazine + phosphate + 2 H2O + H(+). It participates in cofactor biosynthesis; riboflavin biosynthesis; riboflavin from 2-hydroxy-3-oxobutyl phosphate and 5-amino-6-(D-ribitylamino)uracil: step 1/2. Its function is as follows. Catalyzes the formation of 6,7-dimethyl-8-ribityllumazine by condensation of 5-amino-6-(D-ribitylamino)uracil with 3,4-dihydroxy-2-butanone 4-phosphate. This is the penultimate step in the biosynthesis of riboflavin. The sequence is that of 6,7-dimethyl-8-ribityllumazine synthase from Staphylococcus haemolyticus (strain JCSC1435).